The sequence spans 194 residues: Histone H1 (194 aa).

The residue at position 1 (Ala1) is an N-acetylalanine; partial. Over residues 1–14 (AEVAPAPAAAAPAK) the composition is skewed to low complexity. Disordered stretches follow at residues 1–31 (AEVAPAPAAAAPAKAPKKKAAAKPKKSGPAV) and 105–194 (AKKP…AAKK). The segment covering 15 to 26 (APKKKAAAKPKK) has biased composition (basic residues). Residues 27–100 (SGPAVGELAG…GASGSFKLNK (74 aa)) form the H15 domain. Residues 116–194 (KAKKVAAKKP…KVKKPAAAKK (79 aa)) are compositionally biased toward basic residues. Ser145, Ser161, and Ser182 each carry phosphoserine.

The protein belongs to the histone H1/H5 family.

The protein resides in the nucleus. Its subcellular location is the chromosome. Functionally, histones H1 are necessary for the condensation of nucleosome chains into higher-order structures. The sequence is that of Histone H1 from Salmo trutta (Brown trout).